A 199-amino-acid chain; its full sequence is Recombination protein RecR (199 aa).

The segment at 57–72 (CSICGNITEDDPCVIC) adopts a C4-type zinc-finger fold. In terms of domain architecture, Toprim spans 80-176 (STVLVVEEAK…KVTRLAHGLS (97 aa)).

The protein belongs to the RecR family.

May play a role in DNA repair. It seems to be involved in an RecBC-independent recombinational process of DNA repair. It may act with RecF and RecO. This is Recombination protein RecR from Lactiplantibacillus plantarum (strain ATCC BAA-793 / NCIMB 8826 / WCFS1) (Lactobacillus plantarum).